We begin with the raw amino-acid sequence, 208 residues long: Probable nicotinate-nucleotide adenylyltransferase (208 aa).

This sequence belongs to the NadD family.

The catalysed reaction is nicotinate beta-D-ribonucleotide + ATP + H(+) = deamido-NAD(+) + diphosphate. It participates in cofactor biosynthesis; NAD(+) biosynthesis; deamido-NAD(+) from nicotinate D-ribonucleotide: step 1/1. Catalyzes the reversible adenylation of nicotinate mononucleotide (NaMN) to nicotinic acid adenine dinucleotide (NaAD). This is Probable nicotinate-nucleotide adenylyltransferase from Kineococcus radiotolerans (strain ATCC BAA-149 / DSM 14245 / SRS30216).